The chain runs to 227 residues: Type II restriction enzyme HhaII (227 aa).

Homodimer.

It carries out the reaction Endonucleolytic cleavage of DNA to give specific double-stranded fragments with terminal 5'-phosphates.. Its function is as follows. A P subtype restriction enzyme that recognizes the double-stranded sequence 5'-GANTC-3' and cleaves after G-1. This is Type II restriction enzyme HhaII (hhaIIR) from Haemophilus parahaemolyticus.